A 405-amino-acid chain; its full sequence is Cysteine desulfurase IscS (405 aa).

Pyridoxal 5'-phosphate-binding positions include 75 to 76 (AT), Asn156, Gln184, and 204 to 206 (SAH). Lys207 bears the N6-(pyridoxal phosphate)lysine mark. Residue Thr244 coordinates pyridoxal 5'-phosphate. Cys329 acts as the Cysteine persulfide intermediate in catalysis. A [2Fe-2S] cluster-binding site is contributed by Cys329.

The protein belongs to the class-V pyridoxal-phosphate-dependent aminotransferase family. NifS/IscS subfamily. As to quaternary structure, homodimer. Forms a heterotetramer with IscU, interacts with other sulfur acceptors. It depends on pyridoxal 5'-phosphate as a cofactor.

It is found in the cytoplasm. It catalyses the reaction (sulfur carrier)-H + L-cysteine = (sulfur carrier)-SH + L-alanine. Its pathway is cofactor biosynthesis; iron-sulfur cluster biosynthesis. In terms of biological role, master enzyme that delivers sulfur to a number of partners involved in Fe-S cluster assembly, tRNA modification or cofactor biosynthesis. Catalyzes the removal of elemental sulfur atoms from cysteine to produce alanine. Functions as a sulfur delivery protein for Fe-S cluster synthesis onto IscU, an Fe-S scaffold assembly protein, as well as other S acceptor proteins. The protein is Cysteine desulfurase IscS of Methylobacillus flagellatus (strain ATCC 51484 / DSM 6875 / VKM B-1610 / KT).